Reading from the N-terminus, the 401-residue chain is Chalcone synthase 1 (401 aa).

Cys-168 is an active-site residue.

This sequence belongs to the thiolase-like superfamily. Chalcone/stilbene synthases family.

It carries out the reaction (E)-4-coumaroyl-CoA + 3 malonyl-CoA + 3 H(+) = 2',4,4',6'-tetrahydroxychalcone + 3 CO2 + 4 CoA. It participates in secondary metabolite biosynthesis; flavonoid biosynthesis. Functionally, the primary product of this enzyme is 4,2',4',6'-tetrahydroxychalcone (also termed naringenin-chalcone or chalcone) which can under specific conditions spontaneously isomerize into naringenin. This Sorghum bicolor (Sorghum) protein is Chalcone synthase 1 (CHS1).